Here is a 616-residue protein sequence, read N- to C-terminus: Chaperone protein HscA (616 aa).

This sequence belongs to the heat shock protein 70 family.

Chaperone involved in the maturation of iron-sulfur cluster-containing proteins. Has a low intrinsic ATPase activity which is markedly stimulated by HscB. Involved in the maturation of IscU. The chain is Chaperone protein HscA from Shigella flexneri serotype 5b (strain 8401).